We begin with the raw amino-acid sequence, 508 residues long: ATP synthase subunit alpha (508 aa).

171-178 serves as a coordination point for ATP; that stretch reads GDRQTGKT.

Belongs to the ATPase alpha/beta chains family. As to quaternary structure, F-type ATPases have 2 components, CF(1) - the catalytic core - and CF(0) - the membrane proton channel. CF(1) has five subunits: alpha(3), beta(3), gamma(1), delta(1), epsilon(1). CF(0) has three main subunits: a(1), b(2) and c(9-12). The alpha and beta chains form an alternating ring which encloses part of the gamma chain. CF(1) is attached to CF(0) by a central stalk formed by the gamma and epsilon chains, while a peripheral stalk is formed by the delta and b chains.

It localises to the cell membrane. It catalyses the reaction ATP + H2O + 4 H(+)(in) = ADP + phosphate + 5 H(+)(out). Functionally, produces ATP from ADP in the presence of a proton gradient across the membrane. The alpha chain is a regulatory subunit. The polypeptide is ATP synthase subunit alpha (Protochlamydia amoebophila (strain UWE25)).